Reading from the N-terminus, the 309-residue chain is Homoserine O-acetyltransferase (309 aa).

Residue cysteine 142 is the Acyl-thioester intermediate of the active site. Substrate-binding residues include lysine 163 and serine 192. The Proton acceptor role is filled by histidine 235. Glutamate 237 is an active-site residue. Arginine 249 contributes to the substrate binding site.

Belongs to the MetA family.

It is found in the cytoplasm. The catalysed reaction is L-homoserine + acetyl-CoA = O-acetyl-L-homoserine + CoA. It functions in the pathway amino-acid biosynthesis; L-methionine biosynthesis via de novo pathway; O-acetyl-L-homoserine from L-homoserine: step 1/1. In terms of biological role, transfers an acetyl group from acetyl-CoA to L-homoserine, forming acetyl-L-homoserine. In Petrotoga mobilis (strain DSM 10674 / SJ95), this protein is Homoserine O-acetyltransferase.